Here is a 384-residue protein sequence, read N- to C-terminus: 2-isopropylmalate synthase 2 (384 aa).

Positions 9–260 constitute a Pyruvate carboxyltransferase domain; the sequence is VYIVDTTLRD…DLGIDTSRFR (252 aa). Residues Asp-18, His-198, His-200, and Asn-234 each contribute to the Mn(2+) site.

The protein belongs to the alpha-IPM synthase/homocitrate synthase family. LeuA type 1 subfamily. In terms of assembly, homodimer. Mn(2+) serves as cofactor.

The protein localises to the cytoplasm. It carries out the reaction 3-methyl-2-oxobutanoate + acetyl-CoA + H2O = (2S)-2-isopropylmalate + CoA + H(+). It participates in amino-acid biosynthesis; L-leucine biosynthesis; L-leucine from 3-methyl-2-oxobutanoate: step 1/4. Its function is as follows. Catalyzes the condensation of the acetyl group of acetyl-CoA with 3-methyl-2-oxobutanoate (2-ketoisovalerate) to form 3-carboxy-3-hydroxy-4-methylpentanoate (2-isopropylmalate). The polypeptide is 2-isopropylmalate synthase 2 (Caldanaerobacter subterraneus subsp. tengcongensis (strain DSM 15242 / JCM 11007 / NBRC 100824 / MB4) (Thermoanaerobacter tengcongensis)).